We begin with the raw amino-acid sequence, 620 residues long: Ferric/cupric reductase transmembrane component 7 (620 aa).

The Extracellular portion of the chain corresponds to 1 to 45; sequence MIEERDLVLSNGIHCIADIHSELYARLKKESQAVTPWVYQKQYGK. The chain crosses the membrane as a helical span at residues 46–66; the sequence is FVTYFVAVIIFLSLIKKLAFM. The Cytoplasmic segment spans residues 67 to 107; sequence YYDSSEEFLPEKKNSPTTPSVFLARIMTKLVAFNRYICYRK. Residues 108 to 128 form a helical membrane-spanning segment; that stretch reads FPTLIFSYLGIPTSVGTFLVV. Residues 129–167 are Extracellular-facing; it reads MATTLYTLLYCFVPHPFYRPCAGFGSPPLSVRAGIMAIS. The Ferric oxidoreductase domain occupies 161-320; the sequence is AGIMAISLVS…LAVKGYLRPG (160 aa). The helical transmembrane segment at 168–188 threads the bilayer; sequence LVSFVFSLSGKINVIGWLVGL. The Cytoplasmic segment spans residues 189–194; sequence SYEKIN. Residues 195-215 form a helical membrane-spanning segment; sequence IYHQWASILCLFFSWVHVIPF. Heme is bound by residues His-197 and His-211. Topologically, residues 216 to 237 are extracellular; that stretch reads LRQARHEGGYERMHQRWKASDM. Residues 238 to 258 traverse the membrane as a helical segment; sequence WRSGVPPILFLNLLWLSSLPI. Over 259–265 the chain is Cytoplasmic; sequence ARRHFYE. Residues 266–286 traverse the membrane as a helical segment; it reads IFLQLHWILAVGFYISLFYHV. His-271 and His-285 together coordinate heme. The Extracellular segment spans residues 287–292; it reads YPELNS. A helical transmembrane segment spans residues 293–313; that stretch reads HMYLVATIVVWFAQLFYRLAV. The Cytoplasmic segment spans residues 314–620; the sequence is KGYLRPGRSF…CYLHSESFGY (307 aa). The FAD-binding FR-type domain occupies 321-419; it reads RSFMASTIAN…DGPYGGIERD (99 aa). Position 369–375 (369–375) interacts with FAD; sequence HPFSIFP. A disordered region spans residues 519 to 544; that stretch reads SDQSDLAKREKDTEFGQDDTESNSTF. The span at 523–532 shows a compositional bias: basic and acidic residues; the sequence is DLAKREKDTE.

The protein belongs to the ferric reductase (FRE) family. FAD serves as cofactor.

Its subcellular location is the cell membrane. The catalysed reaction is 2 a Fe(II)-siderophore + NADP(+) + H(+) = 2 a Fe(III)-siderophore + NADPH. Its function is as follows. Cell surface metalloreductase. May be involved in copper homeostasis. This chain is Ferric/cupric reductase transmembrane component 7 (FRE7), found in Saccharomyces cerevisiae (strain YJM789) (Baker's yeast).